Consider the following 159-residue polypeptide: Ribosomal RNA large subunit methyltransferase H (159 aa).

S-adenosyl-L-methionine-binding positions include Leu76, Gly107, and 126-131; that span reads LSKLTM.

The protein belongs to the RNA methyltransferase RlmH family. In terms of assembly, homodimer.

The protein localises to the cytoplasm. It catalyses the reaction pseudouridine(1915) in 23S rRNA + S-adenosyl-L-methionine = N(3)-methylpseudouridine(1915) in 23S rRNA + S-adenosyl-L-homocysteine + H(+). In terms of biological role, specifically methylates the pseudouridine at position 1915 (m3Psi1915) in 23S rRNA. This is Ribosomal RNA large subunit methyltransferase H from Acinetobacter baylyi (strain ATCC 33305 / BD413 / ADP1).